A 197-amino-acid chain; its full sequence is MLIGIYIAALLLGYLFGSIPFGLILTKIAGTEDLRSIGSGNIGATNVLRTGRKGLAAATLLLDALKGTAAVIIASSFGGAEAAMLAALGAFLGHLFPVWLKFKGGKGVAVYIGVLIGLFWPGAIVFCLLWLATAVTARYSSLSALVAAFITPIFLWWFGHPALASLFAVLTLLLFWMHRENIKRLQAGTESKIGEKK.

Helical transmembrane passes span 5–25 (IYIAALLLGYLFGSIPFGLIL), 54–74 (GLAAATLLLDALKGTAAVIIA), 80–100 (AEAAMLAALGAFLGHLFPVWL), 112–132 (IGVLIGLFWPGAIVFCLLWLA), and 153–173 (IFLWWFGHPALASLFAVLTLL).

The protein belongs to the PlsY family. In terms of assembly, probably interacts with PlsX.

It is found in the cell inner membrane. The enzyme catalyses an acyl phosphate + sn-glycerol 3-phosphate = a 1-acyl-sn-glycero-3-phosphate + phosphate. Its pathway is lipid metabolism; phospholipid metabolism. Functionally, catalyzes the transfer of an acyl group from acyl-phosphate (acyl-PO(4)) to glycerol-3-phosphate (G3P) to form lysophosphatidic acid (LPA). This enzyme utilizes acyl-phosphate as fatty acyl donor, but not acyl-CoA or acyl-ACP. The polypeptide is Glycerol-3-phosphate acyltransferase (Rhodopseudomonas palustris (strain HaA2)).